Reading from the N-terminus, the 53-residue chain is UPF0391 membrane protein YtjA (53 aa).

The next 2 helical transmembrane spans lie at 4–24 (WGII…GGLA) and 30–48 (AAKI…SLFM).

Belongs to the UPF0391 family.

It is found in the cell membrane. This chain is UPF0391 membrane protein YtjA, found in Salmonella agona (strain SL483).